The following is a 407-amino-acid chain: Na(+)-translocating NADH-quinone reductase subunit F (407 aa).

A helical transmembrane segment spans residues 3-23 (IILGVVMFTLIVLALVLVILF). Positions 32 to 126 (GDITISINGD…DMDIELPEEI (95 aa)) constitute a 2Fe-2S ferredoxin-type domain. The [2Fe-2S] cluster site is built by cysteine 69, cysteine 75, cysteine 78, and cysteine 110. One can recognise an FAD-binding FR-type domain in the interval 129–269 (VKKWECTVIS…SGPFGEFFAK (141 aa)). A catalytic region spans residues 272 to 389 (DAEMVFIGGG…PMMNAAVIGM (118 aa)).

It belongs to the NqrF family. In terms of assembly, composed of six subunits; NqrA, NqrB, NqrC, NqrD, NqrE and NqrF. It depends on [2Fe-2S] cluster as a cofactor. FAD serves as cofactor.

It localises to the cell inner membrane. It catalyses the reaction a ubiquinone + n Na(+)(in) + NADH + H(+) = a ubiquinol + n Na(+)(out) + NAD(+). NQR complex catalyzes the reduction of ubiquinone-1 to ubiquinol by two successive reactions, coupled with the transport of Na(+) ions from the cytoplasm to the periplasm. The first step is catalyzed by NqrF, which accepts electrons from NADH and reduces ubiquinone-1 to ubisemiquinone by a one-electron transfer pathway. This chain is Na(+)-translocating NADH-quinone reductase subunit F, found in Vibrio anguillarum (Listonella anguillarum).